Consider the following 555-residue polypeptide: Vetispiradiene synthase 1 (555 aa).

Positions 308, 312, 451, 455, and 459 each coordinate Mg(2+). Positions 308–312 (DDTFD) match the DDXXD motif motif.

The protein belongs to the terpene synthase family. Tpsa subfamily. Mg(2+) is required as a cofactor.

The protein localises to the cytoplasm. It carries out the reaction (2E,6E)-farnesyl diphosphate = (-)-vetispiradiene + diphosphate. The protein operates within secondary metabolite biosynthesis; terpenoid biosynthesis. Functionally, sesquiterpene synthase that catalyzes the formation of vetispiradiene from trans,trans-farnesyl diphosphate. The initial internal cyclization produces the monocyclic intermediate germacrene A. This is Vetispiradiene synthase 1 from Hyoscyamus muticus (Egyptian henbane).